A 554-amino-acid chain; its full sequence is Flavin-dependent halogenase ascD (554 aa).

FAD contacts are provided by G15, G18, and E48. Chloride is bound by residues S331 and G332. Residue V333 coordinates FAD.

This sequence belongs to the flavin-dependent halogenase family.

It catalyses the reaction ilicicolin B + FADH2 + chloride + O2 = ilicicolin A + FAD + 2 H2O + H(+). It functions in the pathway secondary metabolite biosynthesis; terpenoid biosynthesis. Functionally, flavin-dependent halogenase; part of the asc-1 gene cluster that mediates the biosynthesis of both ascochlorin and ascofuranone, a strong inhibitor of cyanide-insensitive alternative oxidases and a promising drug candidate against African trypanosomiasis. The first step in the pathway is performed by the non-reducing polyketide synthase ascC that produces orsellinic acid by condensing acetyl-CoA with 3 malonyl-CoA units. Orsellinic acid is then prenylated by the prenyltransferase ascA to yield ilicicolinic acid B. Ilicicolinic acid B is further reduced to ilicicolin B by the reductase ascB. The halogenase ascD then chlorinates ilicicolin B to produce ilicicolin A which is converted to ilicicolin A epoxide by the cytochrome P450 monooxygenase ascE that catalyzes stereoselective epoxidation of the terminal double bond of the prenyl group. Ilicicolin A epoxide is the last common precursor for the biosynthesis of ascofuranone and ascochlorin. The terpene cyclase ascF produces a monocyclic terpene, and the cyclization reaction is proposed to be initiated by protonation of the terminal epoxide of ilicicolin A epoxide to generate a monocyclic tertiarycation, which is followed by a series of hydride and methyl shifts with abstraction of proton, leading to the formation of the (14S,15R,19R)-trimethylcyclohexanone ring structure of ilicicolin C, which is finally reduced to ascochlorin by the dehydrogenase ascG. On the other hand, ilicicolin A epoxide is hydroxylated by the cytochrome P450 monooxygenase ascH, and the resultant product is cyclized by the terpene cyclase ascI to ascofuranol via protonation-initiated epoxide ring opening, which facilitates the 6-endo-tet cyclization to form the tetrahy-drofuran ring. Finally, ascofuranol is oxidized into ascofuranone by ascJ. This is Flavin-dependent halogenase ascD from Acremonium egyptiacum (Oospora egyptiaca).